We begin with the raw amino-acid sequence, 382 residues long: Anhydro-N-acetylmuramic acid kinase (382 aa).

Residue 22–29 (GTSMDGVD) coordinates ATP.

This sequence belongs to the anhydro-N-acetylmuramic acid kinase family.

It carries out the reaction 1,6-anhydro-N-acetyl-beta-muramate + ATP + H2O = N-acetyl-D-muramate 6-phosphate + ADP + H(+). The protein operates within amino-sugar metabolism; 1,6-anhydro-N-acetylmuramate degradation. Its pathway is cell wall biogenesis; peptidoglycan recycling. Catalyzes the specific phosphorylation of 1,6-anhydro-N-acetylmuramic acid (anhMurNAc) with the simultaneous cleavage of the 1,6-anhydro ring, generating MurNAc-6-P. Is required for the utilization of anhMurNAc either imported from the medium or derived from its own cell wall murein, and thus plays a role in cell wall recycling. This is Anhydro-N-acetylmuramic acid kinase from Burkholderia ambifaria (strain ATCC BAA-244 / DSM 16087 / CCUG 44356 / LMG 19182 / AMMD) (Burkholderia cepacia (strain AMMD)).